Consider the following 397-residue polypeptide: Elongation factor Tu (397 aa).

In terms of domain architecture, tr-type G spans 10-206 (KPHCNIGTIG…TIDEYVPDPE (197 aa)). The segment at 19 to 26 (GHVDHGKT) is G1. 19 to 26 (GHVDHGKT) serves as a coordination point for GTP. Thr26 contributes to the Mg(2+) binding site. Residues 61–65 (GITIS) are G2. The tract at residues 82 to 85 (DCPG) is G3. Residues 82 to 86 (DCPGH) and 137 to 140 (NKCD) contribute to the GTP site. The G4 stretch occupies residues 137-140 (NKCD). A G5 region spans residues 175–177 (SAL).

It belongs to the TRAFAC class translation factor GTPase superfamily. Classic translation factor GTPase family. EF-Tu/EF-1A subfamily. As to quaternary structure, monomer.

It localises to the cytoplasm. It catalyses the reaction GTP + H2O = GDP + phosphate + H(+). Functionally, GTP hydrolase that promotes the GTP-dependent binding of aminoacyl-tRNA to the A-site of ribosomes during protein biosynthesis. This Lachnospira eligens (strain ATCC 27750 / DSM 3376 / VPI C15-48 / C15-B4) (Eubacterium eligens) protein is Elongation factor Tu.